Consider the following 593-residue polypeptide: Glutamyl-tRNA(Gln) amidotransferase subunit B, mitochondrial (593 aa).

The N-terminal 49 residues, 1–49, are a transit peptide targeting the mitochondrion; it reads MLRPWLRQSTRAARSLPCCQCPRPYSSRLPTLTSPSSSVRRLQTSASES. The segment covering 27–42 has biased composition (low complexity); the sequence is SRLPTLTSPSSSVRRL. A disordered region spans residues 27–80; it reads SRLPTLTSPSSSVRRLQTSASESQDRVPLRKQLKQNAKALKAEKRQRRESEEAS. Positions 66–80 are enriched in basic and acidic residues; it reads LKAEKRQRRESEEAS.

The protein belongs to the GatB/GatE family. GatB subfamily. As to quaternary structure, subunit of the heterotrimeric GatCAB amidotransferase (AdT) complex, composed of A, B and C subunits.

It localises to the mitochondrion. The enzyme catalyses L-glutamyl-tRNA(Gln) + L-glutamine + ATP + H2O = L-glutaminyl-tRNA(Gln) + L-glutamate + ADP + phosphate + H(+). In terms of biological role, allows the formation of correctly charged Gln-tRNA(Gln) through the transamidation of misacylated Glu-tRNA(Gln) in the mitochondria. The reaction takes place in the presence of glutamine and ATP through an activated gamma-phospho-Glu-tRNA(Gln). The sequence is that of Glutamyl-tRNA(Gln) amidotransferase subunit B, mitochondrial from Aspergillus oryzae (strain ATCC 42149 / RIB 40) (Yellow koji mold).